The primary structure comprises 378 residues: Probable pectin lyase A (378 aa).

An N-terminal signal peptide occupies residues 1-18 (MKYQDLLAIAGCIANAGA). 2 disulfide bridges follow: cysteine 81–cysteine 100 and cysteine 90–cysteine 224. Asparagine 127 is a glycosylation site (N-linked (GlcNAc...) asparagine). Arginine 254 is a catalytic residue. A disulfide bond links cysteine 321 and cysteine 329.

The protein belongs to the polysaccharide lyase 1 family.

It is found in the secreted. The enzyme catalyses Eliminative cleavage of (1-&gt;4)-alpha-D-galacturonan methyl ester to give oligosaccharides with 4-deoxy-6-O-methyl-alpha-D-galact-4-enuronosyl groups at their non-reducing ends.. In terms of biological role, pectinolytic enzymes consist of four classes of enzymes: pectin lyase, polygalacturonase, pectin methylesterase and rhamnogalacturonase. Among pectinolytic enzymes, pectin lyase is the most important in depolymerization of pectin, since it cleaves internal glycosidic bonds of highly methylated pectins. In Aspergillus fumigatus (strain CBS 144.89 / FGSC A1163 / CEA10) (Neosartorya fumigata), this protein is Probable pectin lyase A (pelA).